The primary structure comprises 443 residues: Squalene synthase (443 aa).

2 helical membrane passes run 291-311 (TSFNFCAIPQVMAIATLELVF) and 423-443 (ILLLSLGVAVFGVVYGVVRII).

This sequence belongs to the phytoene/squalene synthase family. The cofactor is Mg(2+).

It is found in the endoplasmic reticulum membrane. It carries out the reaction 2 (2E,6E)-farnesyl diphosphate + NADPH + H(+) = squalene + 2 diphosphate + NADP(+). The catalysed reaction is 2 (2E,6E)-farnesyl diphosphate + NADH + H(+) = squalene + 2 diphosphate + NAD(+). Its pathway is terpene metabolism; lanosterol biosynthesis; lanosterol from farnesyl diphosphate: step 1/3. Catalyzes the condensation of 2 two farnesyl pyrophosphate moieties to form squalene. It is the first committed enzyme of the sterol biosynthesis pathway. Required for the biosynthesis of ergosterol. The chain is Squalene synthase (ERG9) from Cyberlindnera jadinii (Torula yeast).